The following is a 197-amino-acid chain: Recombination protein RecR (197 aa).

The segment at Cys-54–Cys-69 adopts a C4-type zinc-finger fold. The Toprim domain maps to Thr-77 to Pro-172.

It belongs to the RecR family.

May play a role in DNA repair. It seems to be involved in an RecBC-independent recombinational process of DNA repair. It may act with RecF and RecO. This chain is Recombination protein RecR, found in Legionella pneumophila (strain Paris).